The sequence spans 244 residues: Multiple organellar RNA editing factor 3, mitochondrial (244 aa).

The transit peptide at 1–62 (MALISTRRTL…GPCYISTRPK (62 aa)) directs the protein to the mitochondrion. 2 disordered regions span residues 59–82 (TRPK…SNRP) and 196–244 (YRFT…KPSA). The span at 60 to 80 (RPKTSGSGYSPLNDPSPNWSN) shows a compositional bias: polar residues. Over residues 210-226 (PRYDRRRETMQVERREP) the composition is skewed to basic and acidic residues.

It belongs to the MORF family. As to quaternary structure, heterodimer with MORF1. Homodimer and heterodimers with MORF8/RIP1, MORF4/RIP4 and MORF5/RIP5.

It localises to the mitochondrion. Its function is as follows. Involved in organellar RNA editing. Required for the processing of RNA editing sites in mitochondria. This Arabidopsis thaliana (Mouse-ear cress) protein is Multiple organellar RNA editing factor 3, mitochondrial.